We begin with the raw amino-acid sequence, 80 residues long: Conotoxin SmIVB (80 aa).

The N-terminal stretch at 1–21 (MGMRMMFTVFLLVVLATTVVS) is a signal peptide. Positions 22–38 (IPSDRASDGRNAEVNER) are excised as a propeptide. 4-hydroxyproline is present on Pro40. The O-linked (HexNAc...) serine glycan is linked to Ser45. Residues Pro55, Pro60, Pro61, Pro70, and Pro72 each carry the 4-hydroxyproline modification. Ser75 is modified (serine amide). The propeptide occupies 76–80 (GRRNH).

Belongs to the conotoxin A superfamily. Post-translationally, contains 3 disulfide bonds. In terms of tissue distribution, expressed by the venom duct.

The protein resides in the secreted. Functionally, neurotoxin with probable activity on sodium channel. Induces intense repetitive firing of the frog neuromuscular junction, leading to a tetanic contracture in muscle fiber (spastic paralysis). In vivo, shows the same effect as the whole venom when injected on fish prey. This is Conotoxin SmIVB from Conus stercusmuscarum (Fly-specked cone).